We begin with the raw amino-acid sequence, 90 residues long: MIDLVKYPVITEKSCRLIEKNQYTFDVDLRLTKPQIKELIEGFFDVNVTAVNTHRPPRKKRRMGLRVGYKPRYKRVIVTIKADQSIPIFA.

It belongs to the universal ribosomal protein uL23 family. As to quaternary structure, part of the 50S ribosomal subunit.

The protein resides in the plastid. Its subcellular location is the chloroplast. Functionally, binds to 23S rRNA. The protein is Large ribosomal subunit protein uL23c (rpl23) of Oltmannsiellopsis viridis (Marine flagellate).